A 183-amino-acid chain; its full sequence is dCTP deaminase (183 aa).

106-111 (KSTYAR) is a binding site for dCTP. E132 acts as the Proton donor/acceptor in catalysis. DCTP is bound by residues Q151, Y165, and Q175.

This sequence belongs to the dCTP deaminase family. As to quaternary structure, homotrimer.

The enzyme catalyses dCTP + H2O + H(+) = dUTP + NH4(+). The protein operates within pyrimidine metabolism; dUMP biosynthesis; dUMP from dCTP (dUTP route): step 1/2. In terms of biological role, catalyzes the deamination of dCTP to dUTP. The polypeptide is dCTP deaminase (Gluconobacter oxydans (strain 621H) (Gluconobacter suboxydans)).